Here is a 99-residue protein sequence, read N- to C-terminus: Large ribosomal subunit protein P1 (99 aa).

In terms of assembly, part of the 50S ribosomal subunit. Homodimer, it forms part of the ribosomal stalk which helps the ribosome interact with GTP-bound translation factors. Forms both a pentameric uL10/P0(P1)2(P1)2 and heptameric uL10/P0(P1)2(P1)2(P1)2 complex, where uL10/P0 forms an elongated spine to which the P1 dimers bind in a sequential fashion. The proportion of heptameric complexes increases during cell growth.

Functionally, forms part of the ribosomal stalk, playing a central role in the interaction of the ribosome with GTP-bound translation factors. The polypeptide is Large ribosomal subunit protein P1 (Methanococcus vannielii).